We begin with the raw amino-acid sequence, 195 residues long: Imidazoleglycerol-phosphate dehydratase (195 aa).

It belongs to the imidazoleglycerol-phosphate dehydratase family.

Its subcellular location is the cytoplasm. The enzyme catalyses D-erythro-1-(imidazol-4-yl)glycerol 3-phosphate = 3-(imidazol-4-yl)-2-oxopropyl phosphate + H2O. It participates in amino-acid biosynthesis; L-histidine biosynthesis; L-histidine from 5-phospho-alpha-D-ribose 1-diphosphate: step 6/9. The polypeptide is Imidazoleglycerol-phosphate dehydratase (Ruegeria sp. (strain TM1040) (Silicibacter sp.)).